A 220-amino-acid chain; its full sequence is Lactate utilization protein C (220 aa).

The protein belongs to the LutC/YkgG family.

In terms of biological role, is involved in L-lactate degradation and allows cells to grow with lactate as the sole carbon source. This Anoxybacillus flavithermus (strain DSM 21510 / WK1) protein is Lactate utilization protein C.